Reading from the N-terminus, the 143-residue chain is Large ribosomal subunit protein uL11 (143 aa).

It belongs to the universal ribosomal protein uL11 family. In terms of assembly, part of the ribosomal stalk of the 50S ribosomal subunit. Interacts with L10 and the large rRNA to form the base of the stalk. L10 forms an elongated spine to which L12 dimers bind in a sequential fashion forming a multimeric L10(L12)X complex. In terms of processing, one or more lysine residues are methylated.

Functionally, forms part of the ribosomal stalk which helps the ribosome interact with GTP-bound translation factors. In Kineococcus radiotolerans (strain ATCC BAA-149 / DSM 14245 / SRS30216), this protein is Large ribosomal subunit protein uL11.